A 51-amino-acid chain; its full sequence is Lantibiotic streptococcin A-M49 (51 aa).

Positions 1-25 (MTKEHEIINSIQEVSLEELDQIIGA) are excised as a propeptide. 2 cross-links (beta-methyllanthionine (Thr-Cys)) span residues 33–38 (TISHEC) and 42–50 (TWAFLATCC). The lanthionine (Ser-Cys) cross-link spans 35–49 (SHECHLNTWAFLATC). The residue at position 48 (threonine 48) is a 2,3-didehydrobutyrine.

This sequence belongs to the type A lantibiotic family. In terms of processing, maturation of lantibiotics involves the enzymatic conversion of Thr, and Ser into dehydrated AA and the formation of thioether bonds with cysteine. This is followed by membrane translocation and cleavage of the modified precursor.

The protein resides in the secreted. Its subcellular location is the cell surface. Lanthionine-containing peptide antibiotic (lantibiotic) active on certain Gram-positive bacteria. The bactericidal activity of lantibiotics is based on depolarization of energized bacterial cytoplasmic membranes, initiated by the formation of aqueous transmembrane pores. In Streptococcus pyogenes serotype M49, this protein is Lantibiotic streptococcin A-M49 (scnA').